The following is a 213-amino-acid chain: mRNA-decapping protein OPG121 (213 aa).

N(7)-methyl-GTP is bound by residues Glu-16 and Arg-50. The region spanning 30 to 209 is the Nudix hydrolase domain; that stretch reads KDTHVFAACI…EYLSYIYNML (180 aa). A Nudix box motif is present at residues 111-132; the sequence is GKLDKKESIKDCLRRELKEESD. Residues Glu-117, Glu-126, Glu-130, Asp-151, and Glu-183 each coordinate Mg(2+). The active-site Nucleophile is Glu-126. Position 151 (Asp-151) interacts with N(7)-methyl-GTP.

Belongs to the Nudix hydrolase family. Requires Mg(2+) as cofactor. Mn(2+) is required as a cofactor.

The enzyme catalyses a 5'-end (N(7)-methyl 5'-triphosphoguanosine)-guanosine in mRNA + H2O = a 5'-end phospho-guanosine in mRNA + N(7)-methyl-GDP + 2 H(+). Functionally, decapping enzyme that remove the protective 5'-cap from both host and viral mRNAs to commit transcripts for decay by the cellular exonuclease XRN1. Accelerates viral and cellular mRNA turnover to eliminate competing host mRNAs and allow stage-specific synthesis of viral proteins. Acceleration of the turnover of cellular transcripts may even promote the shutoff of host protein synthesis. The polypeptide is mRNA-decapping protein OPG121 (OPG121) (Homo sapiens (Human)).